The following is a 932-amino-acid chain: Serine/threonine-protein kinase PknD (932 aa).

In terms of domain architecture, Protein kinase spans 4–291 (YDIVRIIGKG…ELKEDIESHL (288 aa)). Residues 10-18 (IGKGGMGEV) and Lys-33 contribute to the ATP site. Catalysis depends on Asp-138, which acts as the Proton acceptor.

The protein belongs to the protein kinase superfamily. Ser/Thr protein kinase family. Post-translationally, autophosphorylated on serine and threonine residues.

It catalyses the reaction L-seryl-[protein] + ATP = O-phospho-L-seryl-[protein] + ADP + H(+). The catalysed reaction is L-threonyl-[protein] + ATP = O-phospho-L-threonyl-[protein] + ADP + H(+). In terms of biological role, together with the serine/threonine kinase Pkn1, may play a role in the specific interactions with host proteins during intracellular growth. The polypeptide is Serine/threonine-protein kinase PknD (Chlamydia pneumoniae (Chlamydophila pneumoniae)).